A 156-amino-acid chain; its full sequence is N-glycosidase Npun_R5314 (156 aa).

It belongs to the YbiA family.

It carries out the reaction 2,5-diamino-6-hydroxy-4-(5-phosphoribosylamino)-pyrimidine + H2O = 2,5,6-triamino-4-hydroxypyrimidine + D-ribose 5-phosphate. It catalyses the reaction 5-amino-6-(5-phospho-D-ribosylamino)uracil + H2O = 5,6-diaminouracil + D-ribose 5-phosphate. Catalyzes the hydrolysis of the N-glycosidic bond in the first two intermediates of riboflavin biosynthesis, which are highly reactive metabolites, yielding relatively innocuous products. Thus, can divert a surplus of harmful intermediates into relatively harmless products and pre-empt the damage these intermediates would otherwise do. May act on other substrates in vivo. Has no activity against GTP, nucleoside monophosphates or ADP-ribose. This is N-glycosidase Npun_R5314 from Nostoc punctiforme (strain ATCC 29133 / PCC 73102).